A 226-amino-acid chain; its full sequence is V-type proton ATPase subunit E (226 aa).

Belongs to the V-ATPase E subunit family. In terms of assembly, V-ATPase is a heteromultimeric enzyme made up of two complexes: the ATP-hydrolytic V1 complex and the proton translocation V0 complex. The V1 complex consists of three catalytic AB heterodimers that form a heterohexamer, three peripheral stalks each consisting of EG heterodimers, one central rotor including subunits D and F, and the regulatory subunits C and H. The proton translocation complex V0 consists of the proton transport subunit a, a ring of proteolipid subunits c9c'', rotary subunit d, subunits e and f, and the accessory subunits VhaAC45 and ATP6AP2.

Its function is as follows. Subunit of the V1 complex of vacuolar(H+)-ATPase (V-ATPase), a multisubunit enzyme composed of a peripheral complex (V1) that hydrolyzes ATP and a membrane integral complex (V0) that translocates protons. V-ATPase is responsible for acidifying and maintaining the pH of intracellular compartments and in some cell types, is targeted to the plasma membrane, where it is responsible for acidifying the extracellular environment. The sequence is that of V-type proton ATPase subunit E (VHA26) from Manduca sexta (Tobacco hawkmoth).